A 156-amino-acid polypeptide reads, in one-letter code: Small ribosomal subunit protein uS7 (156 aa).

Belongs to the universal ribosomal protein uS7 family. Part of the 30S ribosomal subunit. Contacts proteins S9 and S11.

One of the primary rRNA binding proteins, it binds directly to 16S rRNA where it nucleates assembly of the head domain of the 30S subunit. Is located at the subunit interface close to the decoding center, probably blocks exit of the E-site tRNA. The polypeptide is Small ribosomal subunit protein uS7 (Nitrobacter hamburgensis (strain DSM 10229 / NCIMB 13809 / X14)).